A 628-amino-acid polypeptide reads, in one-letter code: Monoterpene synthase like 1, chloroplastic (628 aa).

Mg(2+) is bound by residues Asp379, Asp383, and Asp531. The DDXXD motif motif lies at 379–383 (DDIYD).

It belongs to the terpene synthase family. Tpsd subfamily. It depends on Mg(2+) as a cofactor. The cofactor is Mn(2+).

It is found in the plastid. It localises to the chloroplast. Its pathway is terpene metabolism; oleoresin biosynthesis. It functions in the pathway secondary metabolite biosynthesis; terpenoid biosynthesis. In terms of biological role, monoterpene synthase (TPS) involved in the biosynthesis of monoterpene natural products included in conifer oleoresin secretions and volatile emissions; these compounds contribute to biotic and abiotic stress defense against herbivores and pathogens. The chain is Monoterpene synthase like 1, chloroplastic from Pinus banksiana (Jack pine).